A 973-amino-acid polypeptide reads, in one-letter code: ATP-dependent DNA helicase Q5 (973 aa).

The Helicase ATP-binding domain occupies 39 to 213 (MAVVKGDKDV…FAALHLKQPV (175 aa)). 52–59 (MPTGAGKS) contacts ATP. A DEAH box motif is present at residues 157 to 160 (DEAH). The 158-residue stretch at 241–398 (NLRDFCLKAL…NKPSDKATLL (158 aa)) folds into the Helicase C-terminal domain. Zn(2+) is bound by residues C412, C428, C432, and C435. A phosphoserine mark is found at S489 and S492. The interval 491–621 (GSGDEGRDEA…ASKDGQLYDM (131 aa)) is interaction with POLR2A. Disordered stretches follow at residues 518 to 538 (GKEAKPEEFTPPGEDCPLRDA), 679 to 795 (TEKL…VPGK), and 822 to 884 (CSLE…AREP). Phosphothreonine is present on T527. Residues 653-726 (PKRVGAGFSK…APGSRTNCGD (74 aa)) form an interaction with RAD51 region. The residue at position 728 (S728) is a Phosphoserine; by CDK1. Basic and acidic residues predominate over residues 840-856 (TQAEKRPRPQQESQEKR). The span at 863 to 878 (PSTNSSALASDPSTEN) shows a compositional bias: polar residues.

It belongs to the helicase family. RecQ subfamily. In terms of assembly, monomer. Interacts with TOP2A, TOP3A and TOP3B. Interacts with RNA polymerase II subunit POLR2A. Identified in a complex with the RNA polymerase II core bound to DNA. Interacts with RAD51. Interacts with WRN; this interaction stimulates WRN helicase activity on DNA fork duplexes. Interacts with MUS1; this interaction promotes MUS81-dependent mitotic DNA synthesis. The cofactor is Zn(2+). Phosphorylated by CDK1 at Ser-728; this phosphorylation is required for RECQL5-mediated disruption of RAD51 filaments on stalled replication forks.

It localises to the nucleus. Its subcellular location is the nucleoplasm. The enzyme catalyses Couples ATP hydrolysis with the unwinding of duplex DNA by translocating in the 3'-5' direction.. The catalysed reaction is ATP + H2O = ADP + phosphate + H(+). Functionally, DNA helicase that plays an important role in DNA replication, transcription and repair. Binds to the RNA polymerase II subunit POLR2A during transcription elongation and suppresses transcription-associated genomic instability. Also associates with POLR1A and enforces the stability of ribosomal DNA arrays. Plays an important role in mitotic chromosome separation after cross-over events and cell cycle progress. Mechanistically, removes RAD51 filaments protecting stalled replication forks at common fragile sites and stimulates MUS81-EME1 endonuclease leading to mitotic DNA synthesis. Required for efficient DNA repair, including repair of inter-strand cross-links. Stimulates DNA decatenation mediated by TOP2A. Prevents sister chromatid exchange and homologous recombination. The polypeptide is ATP-dependent DNA helicase Q5 (Recql5) (Rattus norvegicus (Rat)).